The following is a 513-amino-acid chain: Acyltransferase uat1 (513 aa).

H158 acts as the Proton acceptor in catalysis.

It belongs to the plant acyltransferase family.

It participates in secondary metabolite biosynthesis. Its function is as follows. Acyltransferase; part of the gene cluster that mediates the biosynthesis of the glycolipid biosurfactant ustilagic acid (UA). UA is a secreted cellobiose glycolipid that is toxic for many microorganisms and confers biocontrol activity to U.maydis. UA consists of 15,16-dihydroxypalmitic or 2,15,16-trihydroxypalmitic acid, which is O-glycosidically linked to cellobiose at its terminal hydroxyl group. In addition, the cellobiose moiety is acetylated and acylated with a short-chain hydroxy fatty acid. UA biosynthesis starts with omega-hydroxylation of palmitic acid catalyzed by the cytochrome P450 monooxygenase cyp1. Terminal hydroxylation of palmitic acid precedes subterminal hydroxylation catalyzed by the cytochrome P450 monooxygenase cyp2. Sequential glucosylation of the hydroxy fatty acid is probably catalyzed by the glycosyltransferase ugt1. The cellobiose lipid is further decorated by acetylation of the proximal glucose residue and by acylation with a short-chain beta-hydroxy fatty acid at the distal glucose residue. The acyltransferase uat1 may be a good candidate for catalyzing either acetylation or acylation of the cellobiose lipid. The fatty acid synthase fas2 may be involved in synthesis of the carbon backbone of the short-chain beta-hydroxy fatty acid esterified to the cellobiose disaccharide. The secreted UA consists of a mixture of both alpha-hydroxylated and non-hydroxylated glycolipids; therefore, alpha-hydroxylation of the long-chain fatty, catalyzed by the fatty acid hydroxylase ahd1, occurs late in UA biosynthesis and may be the last step before secretion. This Mycosarcoma maydis (Corn smut fungus) protein is Acyltransferase uat1.